Consider the following 551-residue polypeptide: E-selectin (551 aa).

Residues 1–23 form the signal peptide; sequence MVASWLLSTLTFALVLLIKETST. The C-type lectin domain occupies 24-141; it reads WTYHFSAENM…CSKKKLALCY (118 aa). The Extracellular portion of the chain corresponds to 24 to 495; that stretch reads WTYHFSAENM…CEEPIASNVP (472 aa). 2 N-linked (GlcNAc...) asparagine glycosylation sites follow: Asn32 and Asn45. 17 cysteine pairs are disulfide-bonded: Cys42-Cys140, Cys113-Cys132, Cys145-Cys156, Cys150-Cys165, Cys167-Cys176, Cys182-Cys226, Cys195-Cys208, Cys212-Cys239, Cys244-Cys288, Cys257-Cys270, Cys274-Cys301, Cys306-Cys351, Cys337-Cys364, Cys369-Cys414, Cys400-Cys427, Cys432-Cys473, and Cys459-Cys486. The Ca(2+) site is built by Glu103, Asn105, and Glu111. Residues 103-111, 115-120, and 128-130 contribute to the a carbohydrate site; these read EPNNKQNNE, EIYIKR, and NDE. Residues Asn128 and Asp129 each contribute to the Ca(2+) site. Residues 142–177 form the EGF-like domain; it reads TAACTEASCSGHGECIETINNYSCKCYPGFSGLKCE. Residue Asn162 is glycosylated (N-linked (GlcNAc...) asparagine). Sushi domains are found at residues 180–241, 242–303, 305–366, 368–429, and 430–488; these read VTCE…TCKV, VECD…TCKA, SCDT…VCEA, KCDP…SCQV, and VQCP…TCEE. Asn194, Asn201, and Asn205 each carry an N-linked (GlcNAc...) asparagine glycan. N-linked (GlcNAc...) asparagine glycosylation occurs at Asn267. N-linked (GlcNAc...) asparagine glycans are attached at residues Asn314, Asn321, and Asn334. Asn442 and Asn466 each carry an N-linked (GlcNAc...) asparagine glycan. Residues 496-517 form a helical membrane-spanning segment; that stretch reads LAVGLSVSGTSFLTLTSFLLWF. Residues 518 to 551 are Cytoplasmic-facing; sequence LKYFRKKAKKFVPASSRYVGLEAHGNCQVPSHLI.

Belongs to the selectin/LECAM family. In terms of assembly, interacts with SELPLG/PSGL1 and PODXL2 through the sialyl Lewis X epitope. SELPLG sulfation appears not to be required for this interaction.

It localises to the cell membrane. In terms of biological role, cell-surface glycoprotein having a role in immunoadhesion. Mediates in the adhesion of blood neutrophils in cytokine-activated endothelium through interaction with SELPLG/PSGL1. May have a role in capillary morphogenesis. In Oryctolagus cuniculus (Rabbit), this protein is E-selectin (SELE).